We begin with the raw amino-acid sequence, 188 residues long: UPF0397 protein LCK_00164 (188 aa).

5 helical membrane passes run 15-35, 48-68, 79-99, 121-141, and 154-174; these read VVAT…IAIP, GWLA…VGLI, GAPW…LGFG, WQAV…DIII, and AVTT…LLVA.

The protein belongs to the UPF0397 family.

The protein resides in the cell membrane. In Leuconostoc citreum (strain KM20), this protein is UPF0397 protein LCK_00164.